A 579-amino-acid chain; its full sequence is Nuclear hormone receptor family member nhr-22 (579 aa).

A DNA-binding region (nuclear receptor) is located at residues 93-173 (SRSCHVCSSP…AGMRRELVQA (81 aa)). 2 NR C4-type zinc fingers span residues 96 to 117 (CHVC…CKAC) and 133 to 161 (CIGT…FIKC). A compositionally biased stretch (low complexity) spans 233 to 242 (LSPDPSSSQP). The tract at residues 233 to 256 (LSPDPSSSQPLDMTVTPPPLHRST) is disordered. The 274-residue stretch at 304-577 (EVENKIFELV…SIMYDLLSFR (274 aa)) folds into the NR LBD domain.

This sequence belongs to the nuclear hormone receptor family.

It localises to the nucleus. Its function is as follows. Orphan nuclear receptor. The sequence is that of Nuclear hormone receptor family member nhr-22 (nhr-22) from Caenorhabditis elegans.